A 1032-amino-acid chain; its full sequence is uncharacterized protein (1032 aa).

Residues 1–17 lie on the Cytoplasmic side of the membrane; the sequence is MYEEIRMKFTDIFIRRP. Residues 18–36 traverse the membrane as a helical segment; that stretch reads VLAVSISLLMIILGLQAIS. Over 37-337 the chain is Periplasmic; that stretch reads KLAVREYPKM…TIAINSSIHE (301 aa). The helical transmembrane segment at 338–357 threads the bilayer; it reads VIKTIGEATLIVLVVILMFI. The Cytoplasmic segment spans residues 358–363; that stretch reads GSFRAI. The helical transmembrane segment at 364-383 threads the bilayer; the sequence is LIPILAIPISLIGVLMLLQS. Topologically, residues 384 to 389 are periplasmic; it reads FNFSIN. Residues 390 to 411 traverse the membrane as a helical segment; the sequence is LMTLLALILAIGLVVDDAIVVL. Over 412-438 the chain is Cytoplasmic; the sequence is ENIDRHIKAGETPFRAAIIGTREIAVP. A helical membrane pass occupies residues 439-457; that stretch reads VISMTIALIAVYSPMALMG. Residues 458–470 lie on the Periplasmic side of the membrane; it reads GITGTLFKEFALT. A helical transmembrane segment spans residues 471–493; the sequence is LAGAVFISGVVALTLSPMMSSKL. The Cytoplasmic segment spans residues 494–529; sequence LKSNAKPTWMEERVEHTLGKVNRVYEYMLDLVMLNR. Residues 530–548 traverse the membrane as a helical segment; it reads KSMLAFAVVIFSTLPFLFN. Topologically, residues 549-852 are periplasmic; it reads SLSSELTPNE…ARQLVQEGNA (304 aa). Residues 853–872 traverse the membrane as a helical segment; the sequence is LAVTFALAVIIIFLVLAIQF. The Cytoplasmic portion of the chain corresponds to 873-878; it reads ESIRDP. A helical transmembrane segment spans residues 879–898; it reads MVIMISVPLAVSGALVSLNI. At 899–910 the chain is on the periplasmic side; that stretch reads LSFFSIAGTTLN. Residues 911 to 932 form a helical membrane-spanning segment; the sequence is IYSQVGLITLVGLITKHGILMC. Topologically, residues 933–960 are cytoplasmic; the sequence is EVAKEEQLNHGKTRIEAITHAAKVRLRP. The helical transmembrane segment at 961–979 threads the bilayer; that stretch reads ILMTTAAMVAGLIPLLYAT. The Periplasmic segment spans residues 980-992; that stretch reads GAGAVSRFSIGIV. The chain crosses the membrane as a helical span at residues 993-1015; it reads IVAGLSIGTIFTLFVLPVVYSYV. Residues 1016–1032 lie on the Cytoplasmic side of the membrane; sequence ATEHKPLPVFDENKTTH.

Belongs to the resistance-nodulation-cell division (RND) (TC 2.A.6) family.

Its subcellular location is the cell inner membrane. In terms of biological role, could be a drug efflux pump. This is an uncharacterized protein from Haemophilus influenzae (strain ATCC 51907 / DSM 11121 / KW20 / Rd).